A 734-amino-acid chain; its full sequence is Cell surface glycoprotein gp138B (734 aa).

Positions 1–20 (MKIILTLSIFLICFLQLGQS) are cleaved as a signal peptide. Residues Asn-58, Asn-89, Asn-124, Asn-198, Asn-224, Asn-392, Asn-420, Asn-435, Asn-482, Asn-498, Asn-523, Asn-596, Asn-605, Asn-614, Asn-621, and Asn-630 are each glycosylated (N-linked (GlcNAc...) asparagine). One can recognise an IPT/TIG domain in the interval 504 to 592 (PFIKSYGFLE…SSNEVTFYYF (89 aa)). Residues 678–712 (GETPTPSTTPSTTPSTTPSTTPSSTPTQSPGDDGS) are disordered. A compositionally biased stretch (low complexity) spans 680–712 (TPTPSTTPSTTPSTTPSTTPSSTPTQSPGDDGS). Tandem repeats lie at residues 683 to 686 (PSTT), 687 to 690 (PSTT), 691 to 694 (PSTT), and 695 to 698 (PSTT). The segment at 683–698 (PSTTPSTTPSTTPSTT) is 4 X 4 AA tandem repeats of P-S-T-T. Residue Gly-708 is the site of GPI-like-anchor amidated glycine attachment. The propeptide at 709-734 (DDGSTSSTLSISFYLITLLLLTQQFI) is removed in mature form.

The sugar chains may play important roles in cell fusion. Post-translationally, the GPI-like-anchor contains a phosphoceramide group, rather than a phosphatidyl group.

Its subcellular location is the cell membrane. Involved in the sexual cell fusion of D.discoideum. In Dictyostelium discoideum (Social amoeba), this protein is Cell surface glycoprotein gp138B (GP138B).